Consider the following 427-residue polypeptide: 3-phosphoshikimate 1-carboxyvinyltransferase (427 aa).

The 3-phosphoshikimate site is built by K20, S21, and R25. Position 20 (K20) interacts with phosphoenolpyruvate. Phosphoenolpyruvate is bound by residues G92 and R120. 3-phosphoshikimate contacts are provided by S166, Q168, D312, and K339. A phosphoenolpyruvate-binding site is contributed by Q168. The Proton acceptor role is filled by D312. Phosphoenolpyruvate is bound by residues R343 and R385.

It belongs to the EPSP synthase family. Monomer.

The protein resides in the cytoplasm. The enzyme catalyses 3-phosphoshikimate + phosphoenolpyruvate = 5-O-(1-carboxyvinyl)-3-phosphoshikimate + phosphate. It participates in metabolic intermediate biosynthesis; chorismate biosynthesis; chorismate from D-erythrose 4-phosphate and phosphoenolpyruvate: step 6/7. In terms of biological role, catalyzes the transfer of the enolpyruvyl moiety of phosphoenolpyruvate (PEP) to the 5-hydroxyl of shikimate-3-phosphate (S3P) to produce enolpyruvyl shikimate-3-phosphate and inorganic phosphate. This chain is 3-phosphoshikimate 1-carboxyvinyltransferase, found in Streptococcus thermophilus (strain ATCC BAA-250 / LMG 18311).